The primary structure comprises 146 residues: MPYTDVVIHEIQRLVDIVPMGVPHNIIQDTQFRGYLLPKGTDVFPLLGSVLKDPKYFRYPDAFYPQHFLDEQGRFKKNEAFVPFSSGKRICLGEAMARMELFLYFTSTLQNFSLCSLVPLVDIDITPKLSGFGNITPTYELCLVAR.

A heme-binding site is contributed by Cys-91.

It belongs to the cytochrome P450 family. Requires heme as cofactor.

The protein is Putative inactive cytochrome P450 2G1 (CYP2G1P) of Homo sapiens (Human).